A 388-amino-acid chain; its full sequence is 3-dehydroquinate synthase (388 aa).

This sequence belongs to the archaeal-type DHQ synthase family.

The catalysed reaction is 2-amino-2,3,7-trideoxy-D-lyxo-hept-6-ulosonate + NAD(+) + H2O = 3-dehydroquinate + NH4(+) + NADH + H(+). Its function is as follows. Catalyzes the oxidative deamination and cyclization of 2-amino-3,7-dideoxy-D-threo-hept-6-ulosonic acid (ADH) to yield 3-dehydroquinate (DHQ), which is fed into the canonical shikimic pathway of aromatic amino acid biosynthesis. This Haloarcula marismortui (strain ATCC 43049 / DSM 3752 / JCM 8966 / VKM B-1809) (Halobacterium marismortui) protein is 3-dehydroquinate synthase.